Reading from the N-terminus, the 368-residue chain is F-box/kelch-repeat protein At2g44700 (368 aa).

The segment at Met1–Ala23 is disordered. Over residues Pro14 to Ala23 the composition is skewed to low complexity. One can recognise an F-box domain in the interval Pro25–Arg71. The stretch at Lys177–Val221 is one Kelch repeat.

This chain is F-box/kelch-repeat protein At2g44700, found in Arabidopsis thaliana (Mouse-ear cress).